A 160-amino-acid chain; its full sequence is Major pollen allergen Car b 1 isoforms 1A and 1B (160 aa).

It belongs to the BetVI family.

This Carpinus betulus (European hornbeam) protein is Major pollen allergen Car b 1 isoforms 1A and 1B.